The primary structure comprises 508 residues: Protein DETOXIFICATION 52 (508 aa).

The next 12 membrane-spanning stretches (helical) occupy residues 48-68, 78-98, 122-142, 156-176, 189-209, 222-242, 270-290, 300-320, 341-361, 368-388, 415-437, and 441-463; these read ILAA…LGHI, LAIA…ALGM, VLFL…LGKI, AQTY…LHPL, LTLA…FLVS, AAAS…IAGL, IGVC…GLLI, GILI…GLAV, IVAV…AWGV, IFTN…ILGL, INLG…WAAY, and GLWV…VVAT.

Belongs to the multi antimicrobial extrusion (MATE) (TC 2.A.66.1) family. In terms of tissue distribution, detected in the part of the veins in cotyledons of 6-day-old seedlings and the basal parts of the petioles in older plants. Highly expressed in the vascular tissues of hypocotyl in dark-grown seedlings.

It is found in the late endosome membrane. Its function is as follows. May act as a negative regulator of hypocotyl cell elongation in the light. The polypeptide is Protein DETOXIFICATION 52 (Arabidopsis thaliana (Mouse-ear cress)).